The sequence spans 355 residues: Squamosa promoter-binding protein-like 15 (355 aa).

Positions M1–G27 are disordered. The span at T12–G27 shows a compositional bias: low complexity. An SBP-type zinc finger spans residues T61–P138. C64, C69, C86, H89, C105, C108, H112, and C124 together coordinate Zn(2+). The Bipartite nuclear localization signal motif lies at K121 to K137.

The protein localises to the nucleus. Functionally, probable transcription factor required for the flowering response to vernalization in the shoot apical meristem (SAM). Defines the competence of shoot meristems to flower in response to vernalization in perennials. The protein is Squamosa promoter-binding protein-like 15 of Arabis alpina (Alpine rock-cress).